The primary structure comprises 83 residues: Keratin-associated protein 6-1 (83 aa).

The RPT 1-1 repeat unit spans residues tyrosine 9 to glycine 15. One copy of the RPT 1-2 repeat lies at tyrosine 19–glycine 25. An RPT 2-1 repeat occupies glycine 44 to serine 55. One copy of the RPT 2-2 repeat lies at glycine 56–serine 67.

This sequence belongs to the KRTAP type 6 family. In terms of assembly, interacts with wool keratins.

In the wool cortex, wool keratin intermediate filaments are embedded in an interfilamentous matrix, consisting of hair keratin-associated proteins (KRTAP), which are essential for the formation of a rigid and resistant wool shaft through their extensive disulfide bond cross-linking with abundant cysteine residues of wool keratins. The matrix proteins include the high-sulfur and high-glycine-tyrosine keratins. In Ovis aries (Sheep), this protein is Keratin-associated protein 6-1 (KRTAP6-1).